Consider the following 270-residue polypeptide: 3-phenylpropionate-dihydrodiol/cinnamic acid-dihydrodiol dehydrogenase (270 aa).

10 to 34 provides a ligand contact to NAD(+); that stretch reads FITGGGSGLGLALVERFIEEGAQVA. Ser-143 lines the substrate pocket. The Proton acceptor role is filled by Tyr-156.

It belongs to the short-chain dehydrogenases/reductases (SDR) family.

It catalyses the reaction 3-(cis-5,6-dihydroxycyclohexa-1,3-dien-1-yl)propanoate + NAD(+) = 3-(2,3-dihydroxyphenyl)propanoate + NADH + H(+). The enzyme catalyses (2E)-3-(cis-5,6-dihydroxycyclohexa-1,3-dien-1-yl)prop-2-enoate + NAD(+) = (2E)-3-(2,3-dihydroxyphenyl)prop-2-enoate + NADH + H(+). Its pathway is aromatic compound metabolism; 3-phenylpropanoate degradation. Functionally, converts 3-phenylpropionate-dihydrodiol (PP-dihydrodiol) and cinnamic acid-dihydrodiol (CI-dihydrodiol) into 3-(2,3-dihydroxylphenyl)propanoic acid (DHPP) and 2,3-dihydroxicinnamic acid (DHCI), respectively. This Escherichia coli O7:K1 (strain IAI39 / ExPEC) protein is 3-phenylpropionate-dihydrodiol/cinnamic acid-dihydrodiol dehydrogenase.